A 542-amino-acid chain; its full sequence is Chaperonin GroEL (542 aa).

ATP is bound by residues threonine 29–proline 32, aspartate 86–threonine 90, glycine 413, asparagine 476–alanine 478, and aspartate 492. The tract at residues glutamine 521 to methionine 542 is disordered. A compositionally biased stretch (gly residues) spans methionine 533–methionine 542.

The protein belongs to the chaperonin (HSP60) family. As to quaternary structure, forms a cylinder of 14 subunits composed of two heptameric rings stacked back-to-back. Interacts with the co-chaperonin GroES.

Its subcellular location is the cytoplasm. The catalysed reaction is ATP + H2O + a folded polypeptide = ADP + phosphate + an unfolded polypeptide.. Together with its co-chaperonin GroES, plays an essential role in assisting protein folding. The GroEL-GroES system forms a nano-cage that allows encapsulation of the non-native substrate proteins and provides a physical environment optimized to promote and accelerate protein folding. The protein is Chaperonin GroEL of Listeria innocua serovar 6a (strain ATCC BAA-680 / CLIP 11262).